Here is a 342-residue protein sequence, read N- to C-terminus: Thymidylate synthase (342 aa).

DUMP is bound by residues Arg31 and 156–157; that span reads RR. The active-site Nucleophile is Cys176. Residues 196–199, Asn207, and 237–239 each bind dUMP; these read RSGD and HVY. Asp199 contacts (6R)-5,10-methylene-5,6,7,8-tetrahydrofolate. Residue Ala341 participates in (6R)-5,10-methylene-5,6,7,8-tetrahydrofolate binding.

This sequence belongs to the thymidylate synthase family. Bacterial-type ThyA subfamily. Homodimer.

The protein localises to the cytoplasm. It catalyses the reaction dUMP + (6R)-5,10-methylene-5,6,7,8-tetrahydrofolate = 7,8-dihydrofolate + dTMP. It functions in the pathway pyrimidine metabolism; dTTP biosynthesis. Functionally, catalyzes the reductive methylation of 2'-deoxyuridine-5'-monophosphate (dUMP) to 2'-deoxythymidine-5'-monophosphate (dTMP) while utilizing 5,10-methylenetetrahydrofolate (mTHF) as the methyl donor and reductant in the reaction, yielding dihydrofolate (DHF) as a by-product. This enzymatic reaction provides an intracellular de novo source of dTMP, an essential precursor for DNA biosynthesis. The chain is Thymidylate synthase from Haloferax volcanii (Halobacterium volcanii).